A 202-amino-acid chain; its full sequence is Superoxide dismutase [Mn] (202 aa).

Residues His27, His82, Asp164, and His168 each contribute to the Mn(2+) site.

This sequence belongs to the iron/manganese superoxide dismutase family. In terms of assembly, homodimer. Mn(2+) serves as cofactor.

It carries out the reaction 2 superoxide + 2 H(+) = H2O2 + O2. In terms of biological role, destroys superoxide anion radicals which are normally produced within the cells and which are toxic to biological systems. The chain is Superoxide dismutase [Mn] (sodA) from Listeria innocua serovar 6a (strain ATCC BAA-680 / CLIP 11262).